We begin with the raw amino-acid sequence, 206 residues long: Small ribosomal subunit protein uS4 (206 aa).

The S4 RNA-binding domain occupies arginine 96 to leucine 161.

This sequence belongs to the universal ribosomal protein uS4 family. In terms of assembly, part of the 30S ribosomal subunit. Contacts protein S5. The interaction surface between S4 and S5 is involved in control of translational fidelity.

Its function is as follows. One of the primary rRNA binding proteins, it binds directly to 16S rRNA where it nucleates assembly of the body of the 30S subunit. In terms of biological role, with S5 and S12 plays an important role in translational accuracy. The protein is Small ribosomal subunit protein uS4 of Legionella pneumophila (strain Paris).